Here is a 299-residue protein sequence, read N- to C-terminus: Protease HtpX homolog (299 aa).

Helical transmembrane passes span 19 to 39 and 41 to 61; these read LFIV…VWYF and WGLT…WIAY. Residue H146 participates in Zn(2+) binding. Residue E147 is part of the active site. H150 is a Zn(2+) binding site. 2 helical membrane-spanning segments follow: residues 156–176 and 198–218; these read ILLM…RDVM and IILL…VLII. Residue E227 participates in Zn(2+) binding.

This sequence belongs to the peptidase M48B family. The cofactor is Zn(2+).

The protein localises to the cell membrane. The polypeptide is Protease HtpX homolog (Thermoanaerobacter pseudethanolicus (strain ATCC 33223 / 39E) (Clostridium thermohydrosulfuricum)).